The following is a 250-amino-acid chain: Small ribosomal subunit protein uS3 (250 aa).

In terms of domain architecture, KH type-2 spans 39-109; that stretch reads IRNYVQARLK…EVKIDVVEVI (71 aa). Residues 225-239 are compositionally biased toward basic and acidic residues; that stretch reads INERRGDSKSRPRDP. Residues 225-250 are disordered; sequence INERRGDSKSRPRDPRNKRRRRTKRS. Residues 240–250 are compositionally biased toward basic residues; sequence RNKRRRRTKRS.

It belongs to the universal ribosomal protein uS3 family. In terms of assembly, part of the 30S ribosomal subunit. Forms a tight complex with proteins S10 and S14.

Its function is as follows. Binds the lower part of the 30S subunit head. Binds mRNA in the 70S ribosome, positioning it for translation. The sequence is that of Small ribosomal subunit protein uS3 from Chlorobium phaeobacteroides (strain DSM 266 / SMG 266 / 2430).